The primary structure comprises 347 residues: NADH-ubiquinone oxidoreductase chain 2 (347 aa).

9 helical membrane passes run 3–23 (PPIF…VLIS), 25–45 (HWLL…PILM), 59–79 (YFLT…INLL), 111–131 (FHFW…MILL), 149–169 (INPN…GWGG), 200–220 (LMHL…MLFM), 242–262 (LLIL…GFIP), 274–294 (NMII…YFYM), and 325–345 (LLPP…MMLI).

Belongs to the complex I subunit 2 family. As to quaternary structure, core subunit of respiratory chain NADH dehydrogenase (Complex I) which is composed of 45 different subunits. Interacts with TMEM242.

The protein localises to the mitochondrion inner membrane. The catalysed reaction is a ubiquinone + NADH + 5 H(+)(in) = a ubiquinol + NAD(+) + 4 H(+)(out). Its function is as follows. Core subunit of the mitochondrial membrane respiratory chain NADH dehydrogenase (Complex I) which catalyzes electron transfer from NADH through the respiratory chain, using ubiquinone as an electron acceptor. Essential for the catalytic activity and assembly of complex I. This chain is NADH-ubiquinone oxidoreductase chain 2, found in Ailurus fulgens (Himalayan red panda).